A 234-amino-acid chain; its full sequence is 2,3,4,5-tetrahydropyridine-2,6-dicarboxylate N-acetyltransferase (234 aa).

Belongs to the transferase hexapeptide repeat family. DapH subfamily.

The enzyme catalyses (S)-2,3,4,5-tetrahydrodipicolinate + acetyl-CoA + H2O = L-2-acetamido-6-oxoheptanedioate + CoA. It functions in the pathway amino-acid biosynthesis; L-lysine biosynthesis via DAP pathway; LL-2,6-diaminopimelate from (S)-tetrahydrodipicolinate (acetylase route): step 1/3. Catalyzes the transfer of an acetyl group from acetyl-CoA to tetrahydrodipicolinate. The chain is 2,3,4,5-tetrahydropyridine-2,6-dicarboxylate N-acetyltransferase from Lacticaseibacillus paracasei (strain ATCC 334 / BCRC 17002 / CCUG 31169 / CIP 107868 / KCTC 3260 / NRRL B-441) (Lactobacillus paracasei).